The primary structure comprises 535 residues: Dynein axonemal assembly factor 8 (535 aa).

Disordered regions lie at residues 112–215 (AELA…QERR), 228–267 (RDAC…EGPP), 344–380 (PADT…QGMR), 395–444 (TVPP…LRSC), and 461–535 (IAQP…LDQL). Over residues 125-139 (RTKDASSQEGRDPGR) the composition is skewed to basic and acidic residues. Polar residues predominate over residues 166–175 (GSLSFNTKGS). Ser175 carries the phosphoserine modification. Ser362 carries the phosphoserine modification. Acidic residues predominate over residues 415–424 (DSEEEEEEVE). The span at 435 to 444 (SPSSLGLRSC) shows a compositional bias: polar residues.

It localises to the dynein axonemal particle. The protein localises to the cytoplasm. Its function is as follows. In cyliated cells, dynein axonemal particle-specific protein required for deployment of ODA to the axoneme. Interacts with outer dynein arm (ODA) subunits. The sequence is that of Dynein axonemal assembly factor 8 (DNAAF8) from Macaca fascicularis (Crab-eating macaque).